A 417-amino-acid chain; its full sequence is UDP-N-acetylglucosamine 1-carboxyvinyltransferase (417 aa).

Phosphoenolpyruvate is bound at residue 22-23; it reads KN. R93 is a UDP-N-acetyl-alpha-D-glucosamine binding site. The active-site Proton donor is the C117. Position 117 is a 2-(S-cysteinyl)pyruvic acid O-phosphothioketal (C117). UDP-N-acetyl-alpha-D-glucosamine-binding positions include 122 to 126, D304, and I326; that span reads RPVDQ.

It belongs to the EPSP synthase family. MurA subfamily.

Its subcellular location is the cytoplasm. It catalyses the reaction phosphoenolpyruvate + UDP-N-acetyl-alpha-D-glucosamine = UDP-N-acetyl-3-O-(1-carboxyvinyl)-alpha-D-glucosamine + phosphate. Its pathway is cell wall biogenesis; peptidoglycan biosynthesis. Its function is as follows. Cell wall formation. Adds enolpyruvyl to UDP-N-acetylglucosamine. The chain is UDP-N-acetylglucosamine 1-carboxyvinyltransferase from Neisseria meningitidis serogroup B (strain ATCC BAA-335 / MC58).